The following is a 473-amino-acid chain: Nitrogenase vanadium-iron protein alpha chain (473 aa).

Positions 49, 74, and 137 each coordinate [8Fe-7S] cluster. [7Fe-V-9S-C-homocitryl] cluster is bound by residues cysteine 256 and histidine 422.

Belongs to the NifD/NifK/NifE/NifN family. In terms of assembly, hexamer of two alpha, two beta, and two delta chains. Requires [8Fe-7S] cluster as cofactor. The cofactor is [7Fe-V-9S-C-homocitryl] cluster.

It carries out the reaction N2 + 8 reduced [2Fe-2S]-[ferredoxin] + 16 ATP + 16 H2O = H2 + 8 oxidized [2Fe-2S]-[ferredoxin] + 2 NH4(+) + 16 ADP + 16 phosphate + 6 H(+). Its function is as follows. This vanadium-iron protein is part of the nitrogenase complex that catalyzes the key enzymatic reactions in nitrogen fixation. The sequence is that of Nitrogenase vanadium-iron protein alpha chain (vnfD) from Azotobacter chroococcum mcd 1.